A 463-amino-acid chain; its full sequence is Senescence/dehydration-associated protein At3g51250 (463 aa).

Basic and acidic residues predominate over residues Met1–Arg12. Disordered regions lie at residues Met1–Thr31, Pro52–Thr74, and Ile146–Ser172. The span at Val19–Thr31 shows a compositional bias: polar residues. Residues Ile269–Ala437 enclose the Senescence domain.

The sequence is that of Senescence/dehydration-associated protein At3g51250 from Arabidopsis thaliana (Mouse-ear cress).